The following is a 270-amino-acid chain: Indole-3-glycerol phosphate synthase (270 aa).

It belongs to the TrpC family.

It carries out the reaction 1-(2-carboxyphenylamino)-1-deoxy-D-ribulose 5-phosphate + H(+) = (1S,2R)-1-C-(indol-3-yl)glycerol 3-phosphate + CO2 + H2O. The protein operates within amino-acid biosynthesis; L-tryptophan biosynthesis; L-tryptophan from chorismate: step 4/5. The chain is Indole-3-glycerol phosphate synthase from Salinibacter ruber (strain DSM 13855 / M31).